We begin with the raw amino-acid sequence, 190 residues long: NADH-quinone oxidoreductase subunit B (190 aa).

[4Fe-4S] cluster-binding residues include cysteine 39, cysteine 40, cysteine 104, and cysteine 135.

This sequence belongs to the complex I 20 kDa subunit family. As to quaternary structure, NDH-1 is composed of 14 different subunits. Subunits NuoB, C, D, E, F, and G constitute the peripheral sector of the complex. [4Fe-4S] cluster is required as a cofactor.

Its subcellular location is the cell inner membrane. It carries out the reaction a quinone + NADH + 5 H(+)(in) = a quinol + NAD(+) + 4 H(+)(out). In terms of biological role, NDH-1 shuttles electrons from NADH, via FMN and iron-sulfur (Fe-S) centers, to quinones in the respiratory chain. The immediate electron acceptor for the enzyme in this species is believed to be a menaquinone. Couples the redox reaction to proton translocation (for every two electrons transferred, four hydrogen ions are translocated across the cytoplasmic membrane), and thus conserves the redox energy in a proton gradient. This is NADH-quinone oxidoreductase subunit B from Chlorobium phaeobacteroides (strain BS1).